Reading from the N-terminus, the 573-residue chain is DNA ligase (573 aa).

Glu-250 lines the ATP pocket. Residue Lys-252 is the N6-AMP-lysine intermediate of the active site. Residues Arg-257, Arg-272, Glu-301, Phe-342, Arg-432, and Lys-438 each coordinate ATP.

The protein belongs to the ATP-dependent DNA ligase family. Requires Mg(2+) as cofactor.

The catalysed reaction is ATP + (deoxyribonucleotide)n-3'-hydroxyl + 5'-phospho-(deoxyribonucleotide)m = (deoxyribonucleotide)n+m + AMP + diphosphate.. Its function is as follows. DNA ligase that seals nicks in double-stranded DNA during DNA replication, DNA recombination and DNA repair. The sequence is that of DNA ligase from Methanococcus maripaludis (strain DSM 14266 / JCM 13030 / NBRC 101832 / S2 / LL).